The primary structure comprises 617 residues: DNA mismatch repair protein MutL (617 aa).

This sequence belongs to the DNA mismatch repair MutL/HexB family.

Its function is as follows. This protein is involved in the repair of mismatches in DNA. It is required for dam-dependent methyl-directed DNA mismatch repair. May act as a 'molecular matchmaker', a protein that promotes the formation of a stable complex between two or more DNA-binding proteins in an ATP-dependent manner without itself being part of a final effector complex. This is DNA mismatch repair protein MutL from Christiangramia forsetii (strain DSM 17595 / CGMCC 1.15422 / KT0803) (Gramella forsetii).